A 366-amino-acid polypeptide reads, in one-letter code: Galactoside alpha-(1,2)-fucosyltransferase 1 (366 aa).

Residues 1–8 (MWPLSHRH) lie on the Cytoplasmic side of the membrane. Residues 9–25 (LCLAFLLVCVLSAISFF) traverse the membrane as a helical; Signal-anchor for type II membrane protein segment. The Lumenal portion of the chain corresponds to 26 to 366 (LHIHQDSFRH…LSPLWTLAEP (341 aa)). 3 N-linked (GlcNAc...) asparagine glycosylation sites follow: asparagine 66, asparagine 302, and asparagine 328.

The protein belongs to the glycosyltransferase 11 family.

It localises to the golgi apparatus. The protein localises to the golgi stack membrane. It carries out the reaction a beta-D-galactosyl-(1-&gt;4)-N-acetyl-beta-D-glucosaminyl derivative + GDP-beta-L-fucose = an alpha-L-Fuc-(1-&gt;2)-beta-D-Gal-(1-&gt;4)-beta-D-GlcNAc derivative + GDP + H(+). The catalysed reaction is a ganglioside GA1 + GDP-beta-L-fucose = a ganglioside Fuc-GA1 + GDP + H(+). It catalyses the reaction a beta-D-Gal-(1-&gt;3)-beta-D-GlcNAc-(1-&gt;3)-beta-D-Gal-(1-&gt;4)-beta-D-Glc-(1&lt;-&gt;1')-Cer(d18:1(4E)) + GDP-beta-L-fucose = alpha-L-fucosyl-(1-&gt;2)- beta-D-galactosyl-(1-&gt;3)-N-acetyl-beta-D-glucosaminyl-(1-&gt;3)-beta-D-galactosyl-(1-&gt;4)-beta-D-glucosyl-(1&lt;-&gt;1')-N-acylsphing-4-enine + GDP + H(+). The enzyme catalyses a neolactoside nLc4Cer(d18:1(4E)) + GDP-beta-L-fucose = a neolactoside IV(2)-alpha-Fuc-nLc4Cer(d18:1(4E)) + GDP + H(+). It carries out the reaction a ganglioside GM1 + GDP-beta-L-fucose = a ganglioside Fuc-GM1 + GDP + H(+). The catalysed reaction is beta-D-galactosyl-(1-&gt;3)-N-acetyl-D-galactosamine + GDP-beta-L-fucose = alpha-L-fucosyl-(1-&gt;2)-beta-D-galactosyl-(1-&gt;3)-N-acetyl-D-galactosamine + GDP + H(+). The protein operates within protein modification; protein glycosylation. In terms of biological role, catalyzes the transfer of L-fucose, from a guanosine diphosphate-beta-L-fucose, to the terminal galactose residue of glycoconjugates through an alpha(1,2) linkage leading to H antigen synthesis that is an intermediate substrate in the synthesis of ABO blood group antigens. H antigen is essential for maturation of the glomerular layer of the main olfactory bulb, in cell migration and early cell-cell contacts during tumor associated angiogenesis. Preferentially fucosylates soluble lactose and to a lesser extent fucosylates glycolipids gangliosides GA1 and GM1a. The protein is Galactoside alpha-(1,2)-fucosyltransferase 1 of Ateles belzebuth (White-bellied spider monkey).